The sequence spans 347 residues: NADH-ubiquinone oxidoreductase chain 2 (347 aa).

11 helical membrane passes run 3–23, 25–45, 67–87, 96–116, 122–142, 145–165, 178–198, 200–220, 237–257, 274–294, and 325–345; these read PIIL…VMIS, HWLL…PIMM, SMLL…WTVM, MLMT…FWVP, IPLS…MSVL, ILPS…ITIG, IMAY…LYNP, MTLL…TLFM, APIM…LPPL, DSII…YFYM, and LLPT…ILSI.

It belongs to the complex I subunit 2 family. In terms of assembly, core subunit of respiratory chain NADH dehydrogenase (Complex I) which is composed of 45 different subunits. Interacts with TMEM242.

The protein resides in the mitochondrion inner membrane. It catalyses the reaction a ubiquinone + NADH + 5 H(+)(in) = a ubiquinol + NAD(+) + 4 H(+)(out). Functionally, core subunit of the mitochondrial membrane respiratory chain NADH dehydrogenase (Complex I) which catalyzes electron transfer from NADH through the respiratory chain, using ubiquinone as an electron acceptor. Essential for the catalytic activity and assembly of complex I. In Ovis aries (Sheep), this protein is NADH-ubiquinone oxidoreductase chain 2.